The chain runs to 687 residues: Tripartite terminase subunit 3 (687 aa).

Residues 67–91 (HHPATPTSANPDVGTPRPSEDNVPA) are disordered. The short motif at 221–228 (IPRRHGKT) is the Walker A motif element. The Walker B motif signature appears at 316-321 (LLYVDE). Catalysis depends on glutamate 321, which acts as the For ATPase activity. Catalysis depends on for nuclease activity residues aspartate 476, glutamate 550, and aspartate 662.

Belongs to the herpesviridae TRM3 protein family. Interacts with the terminase subunits TRM1 and TRM2. Interacts with portal protein.

The protein localises to the host nucleus. In terms of biological role, component of the molecular motor that translocates viral genomic DNA in empty capsid during DNA packaging. Forms a tripartite terminase complex together with TRM1 and TRM2 in the host cytoplasm. Once the complex reaches the host nucleus, it interacts with the capsid portal vertex. This portal forms a ring in which genomic DNA is translocated into the capsid. TRM3 carries an RNase H-like nuclease activity that plays an important role for the cleavage of concatemeric viral DNA into unit length genomes. This chain is Tripartite terminase subunit 3, found in Human herpesvirus 8 type P (isolate GK18) (HHV-8).